The chain runs to 393 residues: Formate-dependent phosphoribosylglycinamide formyltransferase (393 aa).

Residues 22–23 (EL) and Glu82 contribute to the N(1)-(5-phospho-beta-D-ribosyl)glycinamide site. ATP is bound by residues Arg114, Lys155, 160–165 (SSGKGQ), 195–198 (EGFI), and Glu203. The ATP-grasp domain maps to 119 to 308 (RLAAEELDLP…QFALHARAIL (190 aa)). Positions 267 and 279 each coordinate Mg(2+). Residues Asp286, Lys356, and 363–364 (RR) each bind N(1)-(5-phospho-beta-D-ribosyl)glycinamide.

This sequence belongs to the PurK/PurT family. As to quaternary structure, homodimer.

The catalysed reaction is N(1)-(5-phospho-beta-D-ribosyl)glycinamide + formate + ATP = N(2)-formyl-N(1)-(5-phospho-beta-D-ribosyl)glycinamide + ADP + phosphate + H(+). The protein operates within purine metabolism; IMP biosynthesis via de novo pathway; N(2)-formyl-N(1)-(5-phospho-D-ribosyl)glycinamide from N(1)-(5-phospho-D-ribosyl)glycinamide (formate route): step 1/1. In terms of biological role, involved in the de novo purine biosynthesis. Catalyzes the transfer of formate to 5-phospho-ribosyl-glycinamide (GAR), producing 5-phospho-ribosyl-N-formylglycinamide (FGAR). Formate is provided by PurU via hydrolysis of 10-formyl-tetrahydrofolate. The sequence is that of Formate-dependent phosphoribosylglycinamide formyltransferase from Pseudomonas fluorescens (strain Pf0-1).